Consider the following 199-residue polypeptide: Recombination protein RecR (199 aa).

The C4-type zinc-finger motif lies at 57–72 (CSICGNITEGDPCSIC). The Toprim domain occupies 80 to 176 (THVLVVEQPK…KVTRLAHGLS (97 aa)).

Belongs to the RecR family.

Functionally, may play a role in DNA repair. It seems to be involved in an RecBC-independent recombinational process of DNA repair. It may act with RecF and RecO. This Levilactobacillus brevis (strain ATCC 367 / BCRC 12310 / CIP 105137 / JCM 1170 / LMG 11437 / NCIMB 947 / NCTC 947) (Lactobacillus brevis) protein is Recombination protein RecR.